The primary structure comprises 555 residues: Chaperonin GroEL (555 aa).

ATP-binding positions include 29 to 32 (TLGP), Lys-50, 86 to 90 (DGTTT), Gly-418, and Asp-499. A disordered region spans residues 528 to 555 (HEEDNNTGNRSGGGVGGGHHGGMGGMDF). Positions 537–555 (RSGGGVGGGHHGGMGGMDF) are enriched in gly residues.

Belongs to the chaperonin (HSP60) family. In terms of assembly, forms a cylinder of 14 subunits composed of two heptameric rings stacked back-to-back. Interacts with the co-chaperonin GroES.

The protein resides in the cytoplasm. It carries out the reaction ATP + H2O + a folded polypeptide = ADP + phosphate + an unfolded polypeptide.. Together with its co-chaperonin GroES, plays an essential role in assisting protein folding. The GroEL-GroES system forms a nano-cage that allows encapsulation of the non-native substrate proteins and provides a physical environment optimized to promote and accelerate protein folding. This is Chaperonin GroEL from Orientia tsutsugamushi (strain Ikeda) (Rickettsia tsutsugamushi).